A 432-amino-acid chain; its full sequence is Proline--tRNA ligase (432 aa).

The protein belongs to the class-II aminoacyl-tRNA synthetase family. ProS type 2 subfamily. As to quaternary structure, homodimer.

Its subcellular location is the cytoplasm. The catalysed reaction is tRNA(Pro) + L-proline + ATP = L-prolyl-tRNA(Pro) + AMP + diphosphate. Functionally, catalyzes the attachment of proline to tRNA(Pro) in a two-step reaction: proline is first activated by ATP to form Pro-AMP and then transferred to the acceptor end of tRNA(Pro). This chain is Proline--tRNA ligase, found in Rickettsia prowazekii (strain Madrid E).